The following is an 85-amino-acid chain: uncharacterized protein (85 aa).

Ser22 bears the Phosphoserine mark.

It localises to the cytoplasm. The protein resides in the nucleus. This is an uncharacterized protein from Saccharomyces cerevisiae (strain ATCC 204508 / S288c) (Baker's yeast).